Consider the following 253-residue polypeptide: Beta-crystallin B1 (253 aa).

The span at 1 to 18 (MSQPAAKASATAAVNPGP) shows a compositional bias: low complexity. The disordered stretch occupies residues 1-53 (MSQPAAKASATAAVNPGPDGKGKAGPPPGPAPGSGPAPAPAPAPAQPAPAAKA). The residue at position 2 (Ser2) is an N-acetylserine. Residues 2-59 (SQPAAKASATAAVNPGPDGKGKAGPPPGPAPGSGPAPAPAPAPAQPAPAAKAELPPGS) form an N-terminal arm region. The segment covering 25-47 (GPPPGPAPGSGPAPAPAPAPAQP) has biased composition (pro residues). Beta/gamma crystallin 'Greek key' domains follow at residues 60–99 (YKLV…IVTS) and 100–144 (GPWV…RPIK). The connecting peptide stretch occupies residues 145–149 (MDAQE). Beta/gamma crystallin 'Greek key' domains are found at residues 150 to 191 (HKLC…RVSS) and 192 to 234 (GTWV…RRLR). Residues 236 to 253 (RQWHREGCFPVLAAEPPK) form a C-terminal arm region.

It belongs to the beta/gamma-crystallin family. Homo/heterodimer, or complexes of higher-order. The structure of beta-crystallin oligomers seems to be stabilized through interactions between the N-terminal arms. Specific cleavages in the N-terminal arm occur during lens maturation and give rise to truncated forms, leading to impaired oligomerization and protein insolubilization.

Functionally, crystallins are the dominant structural components of the vertebrate eye lens. The protein is Beta-crystallin B1 (CRYBB1) of Bos taurus (Bovine).